Here is a 426-residue protein sequence, read N- to C-terminus: Homeobox protein knotted-1-like LET12 (426 aa).

3 disordered regions span residues 1 to 26 (MEFQ…QQNA), 85 to 158 (QTSN…ENSW), and 270 to 290 (GVAP…DQAD). Low complexity predominate over residues 15–24 (QQQQQQQQQQ). Positions 104 to 114 (AGGGSNGGGSG) are enriched in gly residues. Residues 139-151 (ENNNNNNNNNNNN) are compositionally biased toward low complexity. Positions 327-347 (ELKHELKQGYKEKIVDIREEI) constitute an ELK domain. The homeobox; TALE-type DNA-binding region spans 348-411 (LRKRRAGKLP…NQRKRNWHSN (64 aa)). Residues 406-426 (RNWHSNPSTSSSQKSQTQECR) are disordered. The span at 413 to 426 (STSSSQKSQTQECR) shows a compositional bias: low complexity.

Belongs to the TALE/KNOX homeobox family. Ubiquitously expressed in the mature plant.

It is found in the nucleus. In terms of biological role, may have a role to play in formative events in ovule and embryo morphogenesis. In Solanum lycopersicum (Tomato), this protein is Homeobox protein knotted-1-like LET12 (LET12).